The primary structure comprises 418 residues: MFKDISIKDYDPDLYQAMVSETKRQESHIELIASENYCSQAVMEAQGSDLTNKYAEGYPGKRYYGGCEYVDIVEQLAIDRAKELFGAEYANVQPHAGSQANSAVFLALLEAGDTVLGMSLDAGGHLTHGAHVNFSGINYNAVQYGLVEETGLIDYDEVERLAQEHKPKMIIAGFSAYSQVVDWQRFRDIADSVGAYLFVDMAHVAGLVAAGVYPSPVPFADVVTTTTHKTLRGPRSGLILSRDDKLAKKLNSAVFPGNQGGPLMHAIAAKAVCFKEALQDDFKTYQQQVVKNAKAMAKVIQERGYEIISGGTENHLMLISLVKQEMTGKEADKWLGDAGITVNKNAVPNDPKSPFVTSGIRIGTPAITTRGFNEAQAADLAGWICDVLDSRGDEKVLADTRAKVEKICAELPVYERNQ.

(6S)-5,6,7,8-tetrahydrofolate contacts are provided by residues L120 and 124–126; that span reads GHL. K229 is modified (N6-(pyridoxal phosphate)lysine). Residue 353–355 participates in (6S)-5,6,7,8-tetrahydrofolate binding; that stretch reads SPF.

The protein belongs to the SHMT family. Homodimer. It depends on pyridoxal 5'-phosphate as a cofactor.

It localises to the cytoplasm. It catalyses the reaction (6R)-5,10-methylene-5,6,7,8-tetrahydrofolate + glycine + H2O = (6S)-5,6,7,8-tetrahydrofolate + L-serine. The protein operates within one-carbon metabolism; tetrahydrofolate interconversion. It participates in amino-acid biosynthesis; glycine biosynthesis; glycine from L-serine: step 1/1. Catalyzes the reversible interconversion of serine and glycine with tetrahydrofolate (THF) serving as the one-carbon carrier. This reaction serves as the major source of one-carbon groups required for the biosynthesis of purines, thymidylate, methionine, and other important biomolecules. Also exhibits THF-independent aldolase activity toward beta-hydroxyamino acids, producing glycine and aldehydes, via a retro-aldol mechanism. The chain is Serine hydroxymethyltransferase from Psychrobacter sp. (strain PRwf-1).